A 199-amino-acid polypeptide reads, in one-letter code: DnaJ homolog subfamily C member 5B (199 aa).

Residues Ser-14 and Ser-16 each carry the phosphoserine modification. One can recognise a J domain in the interval 19–84 (ALYEILGLHK…SKRNIYDKYG (66 aa)).

Interacts with the chaperone complex consisting of HSC70 and SGTA. Post-translationally, palmitoylated.

It is found in the membrane. In Sus scrofa (Pig), this protein is DnaJ homolog subfamily C member 5B (DNAJC5B).